The following is a 142-amino-acid chain: Glycine-rich RNA-binding protein 1 (142 aa).

Positions 1-65 constitute an RRM domain; sequence NSLHSAFSTY…RNITVNEAQS (65 aa). The disordered stretch occupies residues 48–101; the sequence is MNGKELDGRNITVNEAQSRGGRGGGGGGGYGGGRGGGGGYGRRDGGGGGYGGGG. Gly residues predominate over residues 67 to 101; that stretch reads GGRGGGGGGGYGGGRGGGGGYGRRDGGGGGYGGGG.

In terms of biological role, possibly has a role in RNA transcription or processing during stress. This Sorghum bicolor (Sorghum) protein is Glycine-rich RNA-binding protein 1 (GRP1).